The chain runs to 485 residues: Glutamyl-tRNA(Gln) amidotransferase subunit A (485 aa).

Active-site charge relay system residues include lysine 79 and serine 154. Serine 178 acts as the Acyl-ester intermediate in catalysis.

The protein belongs to the amidase family. GatA subfamily. As to quaternary structure, heterotrimer of A, B and C subunits.

It carries out the reaction L-glutamyl-tRNA(Gln) + L-glutamine + ATP + H2O = L-glutaminyl-tRNA(Gln) + L-glutamate + ADP + phosphate + H(+). In terms of biological role, allows the formation of correctly charged Gln-tRNA(Gln) through the transamidation of misacylated Glu-tRNA(Gln) in organisms which lack glutaminyl-tRNA synthetase. The reaction takes place in the presence of glutamine and ATP through an activated gamma-phospho-Glu-tRNA(Gln). In Clostridium botulinum (strain Loch Maree / Type A3), this protein is Glutamyl-tRNA(Gln) amidotransferase subunit A.